The following is a 331-amino-acid chain: MKQTVYTASPESQQIHVWSLNHEGMLTLVQVVDVPGQVQPMVVSPDKRYLYVGVRPEFRVLAYRIAPDDGALTFATESALPGSPTHISTDHHGRFVFVGSYNAGNVSVTRLQDGLPVELVDVVEGLDGCHSANITPDNRTLWVPALKQDRIALFTLSDDGYLAAQEPAEVNTVEGAGPRHMVFHPNQQYAYCVNELNSSVDVWQLKNPHGEIECVQTLDMMPADFSDTRWAADIHITPDGRHLYACDRTASLITVFSVSEDGSVLSVEGFQPTETQPRGFNIDHHGKYLIAAGQKSHHIAVYEIAGAQGLLTEKGRYAVGQGPMWVVVNAY.

Belongs to the cycloisomerase 2 family.

It catalyses the reaction 6-phospho-D-glucono-1,5-lactone + H2O = 6-phospho-D-gluconate + H(+). It participates in carbohydrate degradation; pentose phosphate pathway; D-ribulose 5-phosphate from D-glucose 6-phosphate (oxidative stage): step 2/3. Catalyzes the hydrolysis of 6-phosphogluconolactone to 6-phosphogluconate. The sequence is that of 6-phosphogluconolactonase from Salmonella arizonae (strain ATCC BAA-731 / CDC346-86 / RSK2980).